Reading from the N-terminus, the 121-residue chain is Large ribosomal subunit protein bL12 (121 aa).

Belongs to the bacterial ribosomal protein bL12 family. Homodimer. Part of the ribosomal stalk of the 50S ribosomal subunit. Forms a multimeric L10(L12)X complex, where L10 forms an elongated spine to which 2 to 4 L12 dimers bind in a sequential fashion. Binds GTP-bound translation factors.

Forms part of the ribosomal stalk which helps the ribosome interact with GTP-bound translation factors. Is thus essential for accurate translation. In Streptococcus agalactiae serotype Ia (strain ATCC 27591 / A909 / CDC SS700), this protein is Large ribosomal subunit protein bL12.